A 1674-amino-acid chain; its full sequence is Kinesin-like protein KIF14 (1674 aa).

Residues 1–391 (MSVHTSHSRH…TEPDSLKVEN (391 aa)) are required for PRC1-binding. 2 disordered regions span residues 132 to 158 (ETLN…KGVN) and 171 to 374 (KDSN…PEEN). Composition is skewed to polar residues over residues 142-151 (GSDSASQASR) and 202-214 (SRAP…QTEA). The residue at position 257 (serine 257) is a Phosphoserine. Phosphothreonine is present on threonine 262. Positions 267–279 (VLEHRWTPRHDPP) are enriched in basic and acidic residues. Over residues 302–311 (TFRSASSESR) the composition is skewed to polar residues. A compositionally biased stretch (basic and acidic residues) spans 317 to 329 (VPEHRWTPRHDLP). Residues 391–772 (NSQVTVAVRV…AAQRSNRNID (382 aa)) form a required for microtubule-binding with high affinity region. In terms of domain architecture, Kinesin motor spans 393-736 (QVTVAVRVRP…LRYATQARLI (344 aa)). 482–489 (GQTGSGKS) is an ATP binding site. Positions 743-826 (NEDMNAKLIR…QETKELQKAG (84 aa)) form a coiled coil. Residues 860–911 (TTVGKHTPSSSHDIQLSGVLIADDHCTIRNFGGTVSIVPAGEAKTYVNGTHI) form the FHA domain. The required for CIT-binding stretch occupies residues 936–1674 (PVEVQKGKKL…DCTPNRIQWV (739 aa)). Residues 961 to 1110 (EFAKNELLTA…VQMLQENRGN (150 aa)) adopt a coiled-coil conformation. Serine 973 and serine 1326 each carry phosphoserine. Residues 1618–1674 (GLSKPWESCSSNSKEEQCKSDRADCGKSGPRRACEPHGDATPAVSSGDCTPNRIQWV) form a disordered region. The span at 1630 to 1642 (SKEEQCKSDRADC) shows a compositional bias: basic and acidic residues. Residues 1660-1674 (AVSSGDCTPNRIQWV) are compositionally biased toward polar residues.

This sequence belongs to the TRAFAC class myosin-kinesin ATPase superfamily. Kinesin family. In terms of assembly, directly interacts with PRC1 within a complex also containing KIF4A, KIF20A and KIF23; targets to the central spindle. Directly interacts with CIT depending on the activation state of the kinase (stronger interaction with the kinase-dead form); targets to the midbody. Interacts with ARRB2; the interaction is detected in the nucleus upon OR1D2 stimulation. Interacts with AKT1; the interaction is detected in the plasma membrane upon INS stimulation and promotes AKT1 phosphorylation. Interacts with SVIL; at midbody during cytokinesis. Interacts with RADIL (via PDZ domain); recruits RADIL to the microtubule network restricting RADIL from interaction with activated RAP1A.

Its subcellular location is the nucleus. It is found in the cytoplasm. The protein resides in the cytoskeleton. The protein localises to the spindle. It localises to the midbody. Functionally, microtubule motor protein that binds to microtubules with high affinity through each tubulin heterodimer and has an ATPase activity. Plays a role in many processes like cell division, cytokinesis and also in cell proliferation and apoptosis. During cytokinesis, targets to central spindle and midbody through its interaction with PRC1 and CIT respectively. Regulates cell growth through regulation of cell cycle progression and cytokinesis. During cell cycle progression acts through SCF-dependent proteasomal ubiquitin-dependent protein catabolic process which controls CDKN1B degradation, resulting in positive regulation of cyclins, including CCNE1, CCND1 and CCNB1. During late neurogenesis, regulates the cerebellar and cerebral cortex development and olfactory bulb development through regulation of apoptosis, cell proliferation and cell division. Also is required for chromosome congression and alignment during mitotic cell cycle process. Regulates cell spreading, focal adhesion dynamics, and cell migration through its interaction with RADIL resulting in regulation of RAP1A-mediated inside-out integrin activation by tethering RADIL on microtubules. This chain is Kinesin-like protein KIF14, found in Mus musculus (Mouse).